Here is a 564-residue protein sequence, read N- to C-terminus: Arginine--tRNA ligase (564 aa).

The short motif at 122–132 (PNIAKPFSIGH) is the 'HIGH' region element.

This sequence belongs to the class-I aminoacyl-tRNA synthetase family. As to quaternary structure, monomer.

It localises to the cytoplasm. It carries out the reaction tRNA(Arg) + L-arginine + ATP = L-arginyl-tRNA(Arg) + AMP + diphosphate. This chain is Arginine--tRNA ligase, found in Lactococcus lactis subsp. cremoris (strain MG1363).